We begin with the raw amino-acid sequence, 878 residues long: Pyruvate dehydrogenase phosphatase regulatory subunit, mitochondrial (878 aa).

The N-terminal 26 residues, 1–26 (MLPRLLAVVRGPGSCRGWREGSPARG), are a transit peptide targeting the mitochondrion.

This sequence belongs to the GcvT family. As to quaternary structure, heterodimer of a catalytic (PDP1) and a regulatory (PDPR) subunit.

Its subcellular location is the mitochondrion matrix. In terms of biological role, decreases the sensitivity of PDP1 to magnesium ions, and this inhibition is reversed by the polyamine spermine. The polypeptide is Pyruvate dehydrogenase phosphatase regulatory subunit, mitochondrial (PDPR) (Bos taurus (Bovine)).